A 339-amino-acid polypeptide reads, in one-letter code: Serpentine receptor class alpha-21 (339 aa).

Helical transmembrane passes span F30–I50, F150–A170, V199–V219, I250–L270, and V282–I302.

This sequence belongs to the nematode receptor-like protein sra family.

The protein localises to the membrane. In Caenorhabditis elegans, this protein is Serpentine receptor class alpha-21 (sra-21).